A 216-amino-acid polypeptide reads, in one-letter code: CDP-diacylglycerol--glycerol-3-phosphate 3-phosphatidyltransferase (216 aa).

Helical transmembrane passes span 40–60 (VVSI…FLDG), 88–108 (VMLC…CILY), 141–161 (MGAV…LAGA), and 176–196 (VVPV…FFPI).

Belongs to the CDP-alcohol phosphatidyltransferase class-I family.

Its subcellular location is the cell membrane. The catalysed reaction is a CDP-1,2-diacyl-sn-glycerol + sn-glycerol 3-phosphate = a 1,2-diacyl-sn-glycero-3-phospho-(1'-sn-glycero-3'-phosphate) + CMP + H(+). It functions in the pathway phospholipid metabolism; phosphatidylglycerol biosynthesis; phosphatidylglycerol from CDP-diacylglycerol: step 1/2. Its function is as follows. This protein catalyzes the committed step to the synthesis of the acidic phospholipids. The chain is CDP-diacylglycerol--glycerol-3-phosphate 3-phosphatidyltransferase (pgsA) from Treponema pallidum (strain Nichols).